The sequence spans 187 residues: tRNA (cytidine(56)-2'-O)-methyltransferase (187 aa).

Residues Leu94 and 120-124 (GAEKV) contribute to the S-adenosyl-L-methionine site.

The protein belongs to the aTrm56 family. Homodimer.

The protein resides in the cytoplasm. The enzyme catalyses cytidine(56) in tRNA + S-adenosyl-L-methionine = 2'-O-methylcytidine(56) in tRNA + S-adenosyl-L-homocysteine + H(+). Functionally, specifically catalyzes the AdoMet-dependent 2'-O-ribose methylation of cytidine at position 56 in tRNAs. This is tRNA (cytidine(56)-2'-O)-methyltransferase from Hyperthermus butylicus (strain DSM 5456 / JCM 9403 / PLM1-5).